A 577-amino-acid polypeptide reads, in one-letter code: MLFSKLFAPTLKEPPKDAVLKSHKHLAQAGYIYQVGSGIYNFLPLAKKVLDKIENITHKRMQEHGAQNILMSFVVLASLWEKSGRLDKYGKELLVFKDRKDNDFVLSPTLEENITEIAANFIKSYKQLPVHLYQIHTKFRDEIRPRFGLVRAREFIMKDGYSFHEDAESLDKEFLNTQSAYKEILSDLGLDFRIVEADSGAIGGSKSREFVVLTECGEDTIVVCQNCDYAANIEIAKRSKRPEPLNVPKAQLAKFPTPNTTSAQSVAEFFKTEPYFVLKALVRKVIHKDKETLACFFVRGDDNLEEVKALNALNIIGANALELREANEEDLNKAGLIAGFIGPYGLKKHVSYIIFDEDLKESDCLIVGANEKDFHAVGVDLKGFENLVYADIVQVKESDRCPNCQGELKYHKSLEVGHIFKLGQGYAKSLKASFLDKNGKEQFFEMGCYGIGISRLLSAILEQKSDDLGCVWTKNTAPFDVVIVVSNLKDEAQKKLAFEVYERLLQKGVDALLDDRDARFGAKMRDFELIGERLALIVGKQTLESKEFECIKRANLEKQTIKDIELEEKILEMLASE.

Belongs to the class-II aminoacyl-tRNA synthetase family. ProS type 1 subfamily. In terms of assembly, homodimer.

The protein resides in the cytoplasm. It catalyses the reaction tRNA(Pro) + L-proline + ATP = L-prolyl-tRNA(Pro) + AMP + diphosphate. Catalyzes the attachment of proline to tRNA(Pro) in a two-step reaction: proline is first activated by ATP to form Pro-AMP and then transferred to the acceptor end of tRNA(Pro). As ProRS can inadvertently accommodate and process non-cognate amino acids such as alanine and cysteine, to avoid such errors it has two additional distinct editing activities against alanine. One activity is designated as 'pretransfer' editing and involves the tRNA(Pro)-independent hydrolysis of activated Ala-AMP. The other activity is designated 'posttransfer' editing and involves deacylation of mischarged Ala-tRNA(Pro). The misacylated Cys-tRNA(Pro) is not edited by ProRS. The polypeptide is Proline--tRNA ligase (Helicobacter pylori (strain P12)).